A 445-amino-acid polypeptide reads, in one-letter code: Probable D-serine dehydratase (445 aa).

Lysine 116 bears the N6-(pyridoxal phosphate)lysine mark.

Belongs to the serine/threonine dehydratase family. DsdA subfamily. Pyridoxal 5'-phosphate serves as cofactor.

The enzyme catalyses D-serine = pyruvate + NH4(+). The sequence is that of Probable D-serine dehydratase from Bacillus mycoides (strain KBAB4) (Bacillus weihenstephanensis).